The primary structure comprises 74 residues: ATP synthase subunit c (74 aa).

The next 2 membrane-spanning stretches (helical) occupy residues 5 to 25 (LAYI…LGVG) and 49 to 69 (LFIG…VALL).

This sequence belongs to the ATPase C chain family. In terms of assembly, F-type ATPases have 2 components, F(1) - the catalytic core - and F(0) - the membrane proton channel. F(1) has five subunits: alpha(3), beta(3), gamma(1), delta(1), epsilon(1). F(0) has three main subunits: a(1), b(2) and c(10-14). The alpha and beta chains form an alternating ring which encloses part of the gamma chain. F(1) is attached to F(0) by a central stalk formed by the gamma and epsilon chains, while a peripheral stalk is formed by the delta and b chains.

It is found in the cell inner membrane. In terms of biological role, f(1)F(0) ATP synthase produces ATP from ADP in the presence of a proton or sodium gradient. F-type ATPases consist of two structural domains, F(1) containing the extramembraneous catalytic core and F(0) containing the membrane proton channel, linked together by a central stalk and a peripheral stalk. During catalysis, ATP synthesis in the catalytic domain of F(1) is coupled via a rotary mechanism of the central stalk subunits to proton translocation. Functionally, key component of the F(0) channel; it plays a direct role in translocation across the membrane. A homomeric c-ring of between 10-14 subunits forms the central stalk rotor element with the F(1) delta and epsilon subunits. This is ATP synthase subunit c from Ruegeria sp. (strain TM1040) (Silicibacter sp.).